Reading from the N-terminus, the 152-residue chain is SsrA-binding protein (152 aa).

It belongs to the SmpB family.

Its subcellular location is the cytoplasm. Functionally, required for rescue of stalled ribosomes mediated by trans-translation. Binds to transfer-messenger RNA (tmRNA), required for stable association of tmRNA with ribosomes. tmRNA and SmpB together mimic tRNA shape, replacing the anticodon stem-loop with SmpB. tmRNA is encoded by the ssrA gene; the 2 termini fold to resemble tRNA(Ala) and it encodes a 'tag peptide', a short internal open reading frame. During trans-translation Ala-aminoacylated tmRNA acts like a tRNA, entering the A-site of stalled ribosomes, displacing the stalled mRNA. The ribosome then switches to translate the ORF on the tmRNA; the nascent peptide is terminated with the 'tag peptide' encoded by the tmRNA and targeted for degradation. The ribosome is freed to recommence translation, which seems to be the essential function of trans-translation. The protein is SsrA-binding protein of Lactobacillus helveticus (strain DPC 4571).